A 29-amino-acid chain; its full sequence is Small toxic protein ZorP (29 aa).

A helical transmembrane segment spans residues 10–27; the sequence is VLIAVLELLVALLRLIDL.

The protein localises to the membrane. Functionally, toxic component of a type I toxin-antitoxin (TA) system. Overexpression leads to cell stasis and a decrease in colony-forming units. Probably repressed by cognate small RNA orzP. Base pairing occurs between 18 bases in the 5' UTR of zorP mRNA and the 5' end of OrzP sRNA. The sequence is that of Small toxic protein ZorP from Escherichia coli O157:H7.